We begin with the raw amino-acid sequence, 547 residues long: Varicidin biosynthesis cluster MFS-type transporer (547 aa).

Over residues 1–17 (MTTSTSKNAISKSSQED) the composition is skewed to polar residues. Positions 1 to 33 (MTTSTSKNAISKSSQEDLCSDTKDKGSSGGGNE) are disordered. 11 consecutive transmembrane segments (helical) span residues 47-67 (LVLL…VCIS), 156-176 (LAPS…SVFT), 183-203 (WCFW…FLFV), 224-244 (ALGT…LQWG), 252-272 (SWRV…WLYV), 296-316 (ILFT…VPIW), 330-350 (INFL…GTLV), 360-382 (GQWR…WRYN), 392-412 (AGTL…PFIA), 422-442 (ISLG…VFLA), and 503-523 (CFLV…GMEW).

The protein belongs to the major facilitator superfamily. TCR/Tet family.

The protein resides in the cell membrane. Its function is as follows. MFS-type transporer; part of the gene cluster that mediates the biosynthesis of varicidin A, an antifungal natural product containing a cis-octahydrodecalin core. The polypeptide is Varicidin biosynthesis cluster MFS-type transporer (Talaromyces variabilis (Penicillium variabile)).